We begin with the raw amino-acid sequence, 146 residues long: Kappa-casein (146 aa).

4 O-linked (GalNAc...) threonine glycosylation sites follow: Thr97, Thr107, Thr112, and Thr118. Position 121 is a phosphothreonine (Thr121). Ser125 is subject to Phosphoserine; alternate. Ser125 is a glycosylation site (O-linked (GalNAc...) serine; alternate). O-linked (GalNAc...) threonine glycosylation occurs at Thr142. Ser143 bears the Phosphoserine mark.

The protein belongs to the kappa-casein family. Mammary gland specific. Secreted in milk.

The protein resides in the secreted. Functionally, kappa-casein stabilizes micelle formation, preventing casein precipitation in milk. The protein is Kappa-casein (CSN3) of Panthera uncia (Snow leopard).